The following is a 7760-amino-acid chain: Malpinin synthetase (7760 aa).

2 disordered regions span residues 42–115 (ENPE…VNEK) and 161–180 (LDLP…GDRV). Polar residues predominate over residues 65–79 (TPRSASPLSSYTGSP). The interval 87–389 (TELSRTLSGD…LSLDERTFLL (303 aa)) is condensation 1. The segment covering 164 to 180 (PTDRPRPSHPSFEGDRV) has biased composition (basic and acidic residues). Positions 409–813 (FEQQAERRPH…GRNDHQVKIR (405 aa)) are adenylation 1. The 75-residue stretch at 926-1000 (PPQGELETAI…AFAHAIGQHR (75 aa)) folds into the Carrier 1 domain. Ser-961 carries the O-(pantetheine 4'-phosphoryl)serine modification. A dual epimerase/condensation (E/C) domain 1 region spans residues 1046–1477 (QDIYALAPLQ…VLPADERKLL (432 aa)). The tract at residues 1498 to 1893 (FEQYADRVPN…GRTDYQVKIR (396 aa)) is adenylation 2. The region spanning 2003–2077 (APEGEVENAI…ALAQSIGEHR (75 aa)) is the Carrier 2 domain. At Ser-2038 the chain carries O-(pantetheine 4'-phosphoryl)serine. The interval 2099–2558 (PLIDLNQNDI…LPTEERQLLT (460 aa)) is dual epimerase/condensation (E/C) domain 2. The segment at 2578 to 2973 (FEQHVDRAPD…GRADFQVKIR (396 aa)) is adenylation 3. The Carrier 3 domain maps to 3083 to 3157 (APQGAVEAAI…ALAQSIGEHR (75 aa)). Ser-3118 carries the post-translational modification O-(pantetheine 4'-phosphoryl)serine. A dual epimerase/condensation (E/C) domain 3 region spans residues 3203–3634 (QDIYALAPLQ…HLNVLPAEER (432 aa)). Positions 3658–4057 (FEQQAERTPD…GRNDDQIKIR (400 aa)) are adenylation 4. Positions 4174 to 4248 (APQGEVETAL…AFASRVQEQL (75 aa)) constitute a Carrier 4 domain. Residue Ser-4209 is modified to O-(pantetheine 4'-phosphoryl)serine. The condensation 2 stretch occupies residues 4267–4705 (LPLSFAQQRL…AAEILSQDER (439 aa)). Residues 4729-5133 (FEQRVESTPD…GRNDHQVKIR (405 aa)) are adenylation 5. Positions 5250-5324 (APEGEVETAI…VFAASIGHHQ (75 aa)) constitute a Carrier 5 domain. Ser-5285 is subject to O-(pantetheine 4'-phosphoryl)serine. The interval 5370–5804 (QDIYSLSPLQ…VLPAEERTLL (435 aa)) is dual dehydration/condensation (C*) domain. Residues 5825 to 6224 (FEQQSERTPE…GRNDDQVKIR (400 aa)) form an adenylation 6 region. Residues 6338–6412 (APQGEVETAL…ALAQSIGQHH (75 aa)) enclose the Carrier 6 domain. An O-(pantetheine 4'-phosphoryl)serine modification is found at Ser-6373. Residues 6458-6890 (QDIYALSPLQ…QLDTVPAEEH (433 aa)) are dual epimerase/condensation (E/C) domain 4. Positions 6914–7300 (FEHQVERTPA…KFLPDGNVVC (387 aa)) are adenylation 7. The Carrier 7 domain maps to 7428–7503 (EPRGAIENIL…ELAPRLLATG (76 aa)). Ser-7463 is modified (O-(pantetheine 4'-phosphoryl)serine). Positions 7561 to 7722 (DNGNMASSLD…KPYVQGSIEV (162 aa)) are thioesterase (TE) domain.

This sequence belongs to the NRP synthetase family.

In terms of biological role, heptamodular nonribosomal peptide synthetase that catalyzes the biosynthesis of malpinins, natural products that show biosurfactant activities. Malpinins are acetylated hexapeptides (Ac-D-Leu/Val-D-Arg-D-Leu/Val-L-Phe/Leu-Dhb-D-Trp) containing a non-canonical amino acid derived from dehydration of L-Trp, (Z)-dehydrobutyrine (Dhb), at position 5, as well as a C-terminal D-amino acid, D-tryptophan, that can be oxidized to kynurenine. Incorporated D-amino acids in positions 1, 3 and 4 are variable resulting in the malpinin A-congeners malpinin B to E. Both modules M1 and M3 have relaxed specificity towards aliphatic amino acids (L-Leu &gt; L-Met &gt; L/D-Val &gt; L-Cys), explaining Val at position 1 and 3 in malpinin A-congeners malpinin B to D. The incorporation of L-Leu, but not N-acetyl-L-Leu by module 1 suggests the N-terminal acetylation occurs at a later stage of biosynthesis. Similar to M1 and M3, M4 has a broad substrate spectrum showing the highest activity with L-Phe followed by other hydrophobic amino acids (L-Phe &gt; L-Met = L-Trp). In contrast, M2, M5 and M6 are highly specific for L-Arg, L-Thr, and L-Trp, respectively. Solely, M7 converted its preferred substrate (L-Phe) with a 15 000-fold reduced turnover rate compared to the most active module M6, indicating that its A domain cannot contribute to the malpinin biosynthesis due to low activity. Since the last T domain in malA is apparently not loaded with an amino acid, either the TE domain must offload the oligopeptide from the preceding T domain or the dual E/C domain of M7 must transfer the final peptide chain to the free acceptor T domain of M7 prior to release. The sequence is that of Malpinin synthetase from Mortierella alpina (Oleaginous fungus).